A 365-amino-acid polypeptide reads, in one-letter code: tRNA/tmRNA (uracil-C(5))-methyltransferase (365 aa).

S-adenosyl-L-methionine contacts are provided by Gln-189, Tyr-217, Asn-222, Glu-238, and Asp-298. Catalysis depends on Cys-323, which acts as the Nucleophile. Glu-357 acts as the Proton acceptor in catalysis.

It belongs to the class I-like SAM-binding methyltransferase superfamily. RNA M5U methyltransferase family. TrmA subfamily.

It catalyses the reaction uridine(54) in tRNA + S-adenosyl-L-methionine = 5-methyluridine(54) in tRNA + S-adenosyl-L-homocysteine + H(+). It carries out the reaction uridine(341) in tmRNA + S-adenosyl-L-methionine = 5-methyluridine(341) in tmRNA + S-adenosyl-L-homocysteine + H(+). Its function is as follows. Dual-specificity methyltransferase that catalyzes the formation of 5-methyluridine at position 54 (m5U54) in all tRNAs, and that of position 341 (m5U341) in tmRNA (transfer-mRNA). This is tRNA/tmRNA (uracil-C(5))-methyltransferase from Shewanella amazonensis (strain ATCC BAA-1098 / SB2B).